A 131-amino-acid chain; its full sequence is uncharacterized protein (131 aa).

Residues 1-67 (MCSARKLLRG…HSGEPIGDDY (67 aa)) are disordered. The residue at position 14 (Ser14) is a Phosphoserine. Residues 99-119 (VVVLFFWLMLWFLGLQALGLV) traverse the membrane as a helical segment.

Belongs to the FAM241 family.

The protein resides in the membrane. This is an uncharacterized protein from Mus musculus (Mouse).